Here is a 255-residue protein sequence, read N- to C-terminus: MPYLYRIAYDGTLFYGFTGHPRSLEPHLRRALGDVLGRGSRTDPGVSAVGNVVMTSAKVQPAAANSKLPRGVWVWAAAEVPEGFNPRRARSRHYLYVAPHWGEDLDSMREAAELLAGTHDYASFVQRRGEPASTVTTIFSITVETRGDLVFLHFVGRGFRNKMIRKLAWAILAAGRGVLRKRDIADLLERPKPGAVPSAPAEGLVLLDIDYGVEFQVDYPSLRKAYRYFLWRYRYAAAHAAVFKAAGEALAAWEE.

Residue Asp-43 is the Nucleophile of the active site. Position 94 (Tyr-94) interacts with substrate.

Belongs to the tRNA pseudouridine synthase TruA family.

The catalysed reaction is uridine(38/39/40) in tRNA = pseudouridine(38/39/40) in tRNA. Formation of pseudouridine at positions 38, 39 and 40 in the anticodon stem and loop of transfer RNAs. The chain is tRNA pseudouridine synthase A from Pyrobaculum neutrophilum (strain DSM 2338 / JCM 9278 / NBRC 100436 / V24Sta) (Thermoproteus neutrophilus).